We begin with the raw amino-acid sequence, 490 residues long: GTPase Der (490 aa).

2 consecutive EngA-type G domains span residues 1–165 and 227–400; these read MRIA…QIPV and LKVA…TIAT. GTP contacts are provided by residues 7–14, 54–58, 117–120, 233–240, 280–284, and 345–348; these read GRPNVGKS, DTGGV, NKAD, GHPNVGKS, DTAGL, and NKWD. In terms of domain architecture, KH-like spans 401–485; sequence TKLSTSLVNK…PFDLEYKAKP (85 aa).

The protein belongs to the TRAFAC class TrmE-Era-EngA-EngB-Septin-like GTPase superfamily. EngA (Der) GTPase family. In terms of assembly, associates with the 50S ribosomal subunit.

GTPase that plays an essential role in the late steps of ribosome biogenesis. The chain is GTPase Der from Chlamydia trachomatis serovar L2b (strain UCH-1/proctitis).